A 1316-amino-acid polypeptide reads, in one-letter code: DNA-directed RNA polymerase subunit beta' (1316 aa).

Zn(2+) contacts are provided by Cys60, Cys62, Cys75, and Cys78. Positions 535, 537, and 539 each coordinate Mg(2+). 4 residues coordinate Zn(2+): Cys891, Cys968, Cys975, and Cys978.

This sequence belongs to the RNA polymerase beta' chain family. In terms of assembly, the RNAP catalytic core consists of 2 alpha, 1 beta, 1 beta' and 1 omega subunit. When a sigma factor is associated with the core the holoenzyme is formed, which can initiate transcription. Requires Mg(2+) as cofactor. It depends on Zn(2+) as a cofactor.

The enzyme catalyses RNA(n) + a ribonucleoside 5'-triphosphate = RNA(n+1) + diphosphate. Its function is as follows. DNA-dependent RNA polymerase catalyzes the transcription of DNA into RNA using the four ribonucleoside triphosphates as substrates. The polypeptide is DNA-directed RNA polymerase subunit beta' (Mycobacterium bovis (strain BCG / Pasteur 1173P2)).